The chain runs to 857 residues: Leucine--tRNA ligase (857 aa).

The 'HIGH' region motif lies at 42 to 52; sequence PYPSGNLHMGH. The 'KMSKS' region motif lies at 615-619; the sequence is KMSKS. Lys618 lines the ATP pocket.

It belongs to the class-I aminoacyl-tRNA synthetase family.

It is found in the cytoplasm. The enzyme catalyses tRNA(Leu) + L-leucine + ATP = L-leucyl-tRNA(Leu) + AMP + diphosphate. The sequence is that of Leucine--tRNA ligase from Thermosynechococcus vestitus (strain NIES-2133 / IAM M-273 / BP-1).